We begin with the raw amino-acid sequence, 43 residues long: Large ribosomal subunit protein bL32 (43 aa).

This sequence belongs to the bacterial ribosomal protein bL32 family.

In Carsonella ruddii (strain PV), this protein is Large ribosomal subunit protein bL32 (rpmF).